Reading from the N-terminus, the 124-residue chain is uncharacterized protein (124 aa).

Positions 1 to 23 (MHKLLKLLSITLIGLSVATGVQA) are cleaved as a signal peptide.

The protein belongs to the cytochrome b562 family.

This is an uncharacterized protein from Pasteurella multocida (strain Pm70).